The chain runs to 479 residues: Aspartyl/glutamyl-tRNA(Asn/Gln) amidotransferase subunit B (479 aa).

The protein belongs to the GatB/GatE family. GatB subfamily. In terms of assembly, heterotrimer of A, B and C subunits.

The catalysed reaction is L-glutamyl-tRNA(Gln) + L-glutamine + ATP + H2O = L-glutaminyl-tRNA(Gln) + L-glutamate + ADP + phosphate + H(+). It carries out the reaction L-aspartyl-tRNA(Asn) + L-glutamine + ATP + H2O = L-asparaginyl-tRNA(Asn) + L-glutamate + ADP + phosphate + 2 H(+). In terms of biological role, allows the formation of correctly charged Asn-tRNA(Asn) or Gln-tRNA(Gln) through the transamidation of misacylated Asp-tRNA(Asn) or Glu-tRNA(Gln) in organisms which lack either or both of asparaginyl-tRNA or glutaminyl-tRNA synthetases. The reaction takes place in the presence of glutamine and ATP through an activated phospho-Asp-tRNA(Asn) or phospho-Glu-tRNA(Gln). The polypeptide is Aspartyl/glutamyl-tRNA(Asn/Gln) amidotransferase subunit B (Streptococcus pyogenes serotype M5 (strain Manfredo)).